Reading from the N-terminus, the 662-residue chain is Threonine--tRNA ligase (662 aa).

Residues 1–64 (MSQSVSLTFP…ADGKIEIITR (64 aa)) enclose the TGS domain. The tract at residues 245-547 (DHRRLGREMD…LIENFAGHMP (303 aa)) is catalytic. Cysteine 341, histidine 392, and histidine 524 together coordinate Zn(2+).

Belongs to the class-II aminoacyl-tRNA synthetase family. In terms of assembly, homodimer. Zn(2+) serves as cofactor.

It is found in the cytoplasm. It catalyses the reaction tRNA(Thr) + L-threonine + ATP = L-threonyl-tRNA(Thr) + AMP + diphosphate + H(+). Its function is as follows. Catalyzes the attachment of threonine to tRNA(Thr) in a two-step reaction: L-threonine is first activated by ATP to form Thr-AMP and then transferred to the acceptor end of tRNA(Thr). Also edits incorrectly charged L-seryl-tRNA(Thr). The protein is Threonine--tRNA ligase of Rhizobium rhizogenes (strain K84 / ATCC BAA-868) (Agrobacterium radiobacter).